The sequence spans 416 residues: MTMPSTANGGFPSVVVTAVTATTSISPDIESTWKGLLAGESGIHVLEDEYITKWDLPVKIGGHLKEPVDSHMSRLDLRRMSYVQRMSKLLSGRLWESTGSPEVDPDRFTVVVGTGLGGAERIVESYDLMNAGGPRKVSPLAVQMIMPNGAAATVGLQLGACAGVMTPVSACSSGSEAIAHAWRQIIMGDADVAVCGGVEGPIEALPIAAFSMMRAMSTRNDDPEGASRPFDKNRDGFVFGEAGALMLIETEEHAKARGAKPLARLLGAGITSDAFHMVAPAADGVRAGRAMTRSLELAGLSAKDVDHVNAHGTATPIGDSAEANAIRVAGCEQAAVYAPKSALGHSIGAVGALESVLTVLALRDGVIPPTLNYQTPDPEIDLDIVAGEPRYGDYRYAINNSFGFGGHNVALAFGRY.

One can recognise a Ketosynthase family 3 (KS3) domain in the interval 11–415 (FPSVVVTAVT…GHNVALAFGR (405 aa)). Residues Cys171, His311, and His345 each act as for beta-ketoacyl synthase activity in the active site. Substrate contacts are provided by His311 and His345.

It belongs to the thiolase-like superfamily. Beta-ketoacyl-ACP synthases family.

The protein localises to the cytoplasm. It carries out the reaction an ultra-long-chain mono-unsaturated fatty acyl-[ACP] + malonyl-[ACP] + H(+) = a 3-oxo-ultra-long-chain mono-unsaturated fatty acyl-[ACP] + holo-[ACP] + CO2. Its pathway is lipid metabolism; mycolic acid biosynthesis. Functionally, part of the mycobacterial fatty acid elongation system FAS-II, which is involved in mycolic acid biosynthesis. Catalyzes the elongation of long chain acyl-ACP substrates by the addition of two carbons from malonyl-ACP to an acyl acceptor. Involved in the initial extension of the mycolate chain and forms monounsaturated fatty acids that averaged 40 carbons in length. This Mycobacterium leprae (strain TN) protein is 3-oxoacyl-[acyl-carrier-protein] synthase 1 (kasA).